The primary structure comprises 185 residues: Translation initiation factor IF-3, chloroplastic (185 aa).

It belongs to the IF-3 family. As to quaternary structure, monomer.

It localises to the plastid. It is found in the chloroplast. In terms of biological role, IF-3 binds to the 30S ribosomal subunit and shifts the equilibrium between 70S ribosomes and their 50S and 30S subunits in favor of the free subunits, thus enhancing the availability of 30S subunits on which protein synthesis initiation begins. This is Translation initiation factor IF-3, chloroplastic from Cyanidium caldarium (Red alga).